Consider the following 200-residue polypeptide: MTIKSLLSDIEREERNVHKAIKDSVKRNDLVTAKALAREIVSSRRTVKRLYENKAQVNSISMHLGESIATAVTVGNLSKSGEVMKLVNSLMKAPEIAVTMQAFSKEMTKTGVIEEFVSDAVDNALDSEDIEEEIEEEVDKVLTAIAGETAAELPEAVRKQKMNVPAQKAETLHGEDAIVEGVDAEEELEAIRYRLANVRS.

Residues 2–23 (TIKSLLSDIEREERNVHKAIKD) adopt a coiled-coil conformation.

It belongs to the SNF7 family. In terms of assembly, component of the endosomal sorting required for transport complex III (ESCRT-III), composed at least of VPS2, VPS20, VPS24 and VPS32.

The protein localises to the endosome. Its function is as follows. Component of the ESCRT-III complex, which is required for multivesicular bodies (MVBs) formation and sorting of endosomal cargo proteins into MVBs. The ESCRT-III complex is probably involved in the concentration of MVB cargo. The protein is Putative vacuolar protein sorting-associated protein 24 homolog 2 (VPS24-2) of Arabidopsis thaliana (Mouse-ear cress).